A 25-amino-acid chain; its full sequence is Hypotensin-2 (25 aa).

Residues Ala1–Ala25 are disordered. At Ser6 the chain carries Phosphoserine. Basic and acidic residues predominate over residues Asp11 to Ala25.

This sequence belongs to the non-disulfide-bridged peptide (NDBP) superfamily. In terms of tissue distribution, expressed by the venom gland.

It is found in the secreted. Agonist of the B2 bradykinin receptor (BDKRB2). Potentiates the hypotensive effect of bradykinin (BK) and induces a direct vasorelaxing effect, independently of BK, by endothelium- and nitric oxide (NO)-dependent mechanisms in rat aortic ring preparations. Does not inhibit the angiotensin-converting enzyme (ACE). Also exerts proangiogenic, antiinflammatory, and antifibrogenic activities. Does not inhibit the angiotensin-converting enzyme (ACE) but weakly increases its activity, and weakly inhibits neprilysin (NEP) in a non-competitive manner. Exerts intermediate cytotoxicity and pro-inflammatory effects on mouse macrophages, and increases the phagocytic activity of these murine cells. Its function is as follows. Presents weak hemolytic activity at physiological concentrations (micromolar range), and weak lactate dehydrogenase (LDH) release from mast cells. Does not induce mast cell degranulation, and antimicrobial effects. In vivo, causes intense pain (but no edema formation), when injected in mice hind paws. Also induces discomfort and anxiety in mice, as it moderately diminishes locomotion and moderately increases rearing behavior. This chain is Hypotensin-2, found in Tityus serrulatus (Brazilian scorpion).